Reading from the N-terminus, the 61-residue chain is MARYRRRSRSRSRSRYRRRRRRRSRGRRRRTYRRSRRHSRRRRGRRRGYSRRRYSRRGRRR.

The interval Met-1–Arg-61 is disordered.

Belongs to the protamine P1 family. In terms of tissue distribution, testis.

The protein localises to the nucleus. It is found in the chromosome. Protamines substitute for histones in the chromatin of sperm during the haploid phase of spermatogenesis. They compact sperm DNA into a highly condensed, stable and inactive complex. This Dasyurus hallucatus (Northern quoll) protein is Sperm protamine P1 (PRM1).